The sequence spans 287 residues: Protease HtpX (287 aa).

2 helical membrane passes run 4-24 (IMLF…VLNI) and 36-56 (LSGL…ISLM). H143 is a binding site for Zn(2+). Residue E144 is part of the active site. Residue H147 coordinates Zn(2+). The next 2 membrane-spanning stretches (helical) occupy residues 158-178 (LMQG…ANIV) and 192-212 (MVYF…ASFI). E221 serves as a coordination point for Zn(2+).

It belongs to the peptidase M48B family. The cofactor is Zn(2+).

It localises to the cell inner membrane. This is Protease HtpX from Vibrio parahaemolyticus serotype O3:K6 (strain RIMD 2210633).